Consider the following 540-residue polypeptide: Testis-specific chromodomain protein Y 1 (540 aa).

In terms of domain architecture, Chromo spans 6 to 66 (FEVEAIVDKR…RQTEKQKKLT (61 aa)). A disordered region spans residues 76 to 106 (NNARRRTSRSTKANYSKNSPKTPVTDKHHRS). Over residues 87 to 97 (KANYSKNSPKT) the composition is skewed to polar residues.

Interacts (via chromo domain) with histone H3K9me3. In terms of tissue distribution, testis-specific. Detected in spermatids (at protein level).

Its subcellular location is the nucleus. The enzyme catalyses L-lysyl-[protein] + acetyl-CoA = N(6)-acetyl-L-lysyl-[protein] + CoA + H(+). Has histone acetyltransferase activity, with a preference for histone H4. The polypeptide is Testis-specific chromodomain protein Y 1 (CDY1) (Homo sapiens (Human)).